A 289-amino-acid chain; its full sequence is ATP phosphoribosyltransferase (289 aa).

This sequence belongs to the ATP phosphoribosyltransferase family. Long subfamily. Mg(2+) is required as a cofactor.

Its subcellular location is the cytoplasm. The catalysed reaction is 1-(5-phospho-beta-D-ribosyl)-ATP + diphosphate = 5-phospho-alpha-D-ribose 1-diphosphate + ATP. Its pathway is amino-acid biosynthesis; L-histidine biosynthesis; L-histidine from 5-phospho-alpha-D-ribose 1-diphosphate: step 1/9. Its activity is regulated as follows. Feedback inhibited by histidine. Catalyzes the condensation of ATP and 5-phosphoribose 1-diphosphate to form N'-(5'-phosphoribosyl)-ATP (PR-ATP). Has a crucial role in the pathway because the rate of histidine biosynthesis seems to be controlled primarily by regulation of HisG enzymatic activity. The chain is ATP phosphoribosyltransferase from Methanosarcina mazei (strain ATCC BAA-159 / DSM 3647 / Goe1 / Go1 / JCM 11833 / OCM 88) (Methanosarcina frisia).